We begin with the raw amino-acid sequence, 56 residues long: Large ribosomal subunit protein eL37 (56 aa).

4 residues coordinate Zn(2+): C19, C22, C34, and C37. A C4-type zinc finger spans residues 19–37; the sequence is CRRCGSVSLNVHTKQCTSC.

Belongs to the eukaryotic ribosomal protein eL37 family. Zn(2+) is required as a cofactor.

In terms of biological role, binds to the 23S rRNA. This Methanosarcina mazei (strain ATCC BAA-159 / DSM 3647 / Goe1 / Go1 / JCM 11833 / OCM 88) (Methanosarcina frisia) protein is Large ribosomal subunit protein eL37.